Consider the following 1310-residue polypeptide: Major viral transcription factor ICP4 homolog (1310 aa).

Disordered regions lie at residues 117–271 (AGAR…GPVE), 285–454 (GAKA…TPII), and 636–696 (GSSP…SLLD). Positions 341-350 (PVEKKPKSRE) are enriched in basic and acidic residues. Low complexity-rich tracts occupy residues 351-364 (FVSS…WGSS), 392-407 (PSPS…DGGS), and 648-666 (PSPT…SAAA). The Nuclear localization signal signature appears at 677–685 (RLRTPRKRK). S686 and S722 each carry phosphoserine; by VZV ORF66. Disordered regions lie at residues 1195–1258 (RFVF…SFGV) and 1282–1310 (ELLS…QSRG). A compositionally biased stretch (basic and acidic residues) spans 1217–1227 (RTADDREHALE). The segment covering 1228-1250 (PDDWEVGCEDAWDSEEGGGDDGD) has biased composition (acidic residues).

Belongs to the herpesviridae ICP4 family. Interacts with IE4 and IE63. Interacts with human USF1 and SP1. In terms of processing, phosphorylated by ORF66 protein kinase on Ser-686 and Ser-722. Also phosphorylated by ORF47 protein kinase and by human CSNK2A1/CKII.

The protein localises to the host nucleus. Its subcellular location is the host cytoplasm. The protein resides in the virion tegument. Functionally, transcriptional transactivator. May interact with and recruit specific components of the general transcription machinery to viral promoters and stabilize their formation for transcription initiation. Negatively regulates its own transcription. This immediate early (EI) protein may be necessary in virion for viral pathogenesis. The sequence is that of Major viral transcription factor ICP4 homolog from Homo sapiens (Human).